The following is a 513-amino-acid chain: tRNA-2-methylthio-N(6)-dimethylallyladenosine synthase (513 aa).

One can recognise an MTTase N-terminal domain in the interval 67 to 185; that stretch reads KTFLIKTYGC…LPEILEEAYL (119 aa). Residues C76, C112, C146, C222, C226, and C229 each contribute to the [4Fe-4S] cluster site. Positions 208 to 438 constitute a Radical SAM core domain; that stretch reads REGNIKAWVN…NKKVACYSER (231 aa). One can recognise a TRAM domain in the interval 441–504; that stretch reads QQYEGQTVQV…QFSLNGTFIS (64 aa).

This sequence belongs to the methylthiotransferase family. MiaB subfamily. As to quaternary structure, monomer. It depends on [4Fe-4S] cluster as a cofactor.

Its subcellular location is the cytoplasm. The enzyme catalyses N(6)-dimethylallyladenosine(37) in tRNA + (sulfur carrier)-SH + AH2 + 2 S-adenosyl-L-methionine = 2-methylsulfanyl-N(6)-dimethylallyladenosine(37) in tRNA + (sulfur carrier)-H + 5'-deoxyadenosine + L-methionine + A + S-adenosyl-L-homocysteine + 2 H(+). In terms of biological role, catalyzes the methylthiolation of N6-(dimethylallyl)adenosine (i(6)A), leading to the formation of 2-methylthio-N6-(dimethylallyl)adenosine (ms(2)i(6)A) at position 37 in tRNAs that read codons beginning with uridine. This chain is tRNA-2-methylthio-N(6)-dimethylallyladenosine synthase, found in Staphylococcus saprophyticus subsp. saprophyticus (strain ATCC 15305 / DSM 20229 / NCIMB 8711 / NCTC 7292 / S-41).